Here is a 491-residue protein sequence, read N- to C-terminus: Ketol-acid reductoisomerase (NADP(+)) (491 aa).

The 194-residue stretch at 15–208 (AQLGKCRFMG…GGHRAGVLES (194 aa)) folds into the KARI N-terminal Rossmann domain. NADP(+) contacts are provided by residues 45-48 (CGAQ), R68, R76, S78, and 108-110 (DKQ). H132 is a catalytic residue. G158 contacts NADP(+). 2 KARI C-terminal knotted domains span residues 209–344 (SFVA…TAPQ) and 345–484 (FEGK…MTDM). Positions 217, 221, 389, and 393 each coordinate Mg(2+). S414 serves as a coordination point for substrate.

It belongs to the ketol-acid reductoisomerase family. Mg(2+) is required as a cofactor.

It catalyses the reaction (2R)-2,3-dihydroxy-3-methylbutanoate + NADP(+) = (2S)-2-acetolactate + NADPH + H(+). It carries out the reaction (2R,3R)-2,3-dihydroxy-3-methylpentanoate + NADP(+) = (S)-2-ethyl-2-hydroxy-3-oxobutanoate + NADPH + H(+). Its pathway is amino-acid biosynthesis; L-isoleucine biosynthesis; L-isoleucine from 2-oxobutanoate: step 2/4. It participates in amino-acid biosynthesis; L-valine biosynthesis; L-valine from pyruvate: step 2/4. Functionally, involved in the biosynthesis of branched-chain amino acids (BCAA). Catalyzes an alkyl-migration followed by a ketol-acid reduction of (S)-2-acetolactate (S2AL) to yield (R)-2,3-dihydroxy-isovalerate. In the isomerase reaction, S2AL is rearranged via a Mg-dependent methyl migration to produce 3-hydroxy-3-methyl-2-ketobutyrate (HMKB). In the reductase reaction, this 2-ketoacid undergoes a metal-dependent reduction by NADPH to yield (R)-2,3-dihydroxy-isovalerate. The sequence is that of Ketol-acid reductoisomerase (NADP(+)) from Salmonella dublin (strain CT_02021853).